The following is a 343-amino-acid chain: Phenylalanine--tRNA ligase alpha subunit (343 aa).

Glu256 provides a ligand contact to Mg(2+).

The protein belongs to the class-II aminoacyl-tRNA synthetase family. Phe-tRNA synthetase alpha subunit type 1 subfamily. As to quaternary structure, tetramer of two alpha and two beta subunits. Mg(2+) is required as a cofactor.

It is found in the cytoplasm. The catalysed reaction is tRNA(Phe) + L-phenylalanine + ATP = L-phenylalanyl-tRNA(Phe) + AMP + diphosphate + H(+). This is Phenylalanine--tRNA ligase alpha subunit from Aster yellows witches'-broom phytoplasma (strain AYWB).